The sequence spans 89 residues: MHNISFKLLLLCDLFLSSSSVRHNLAVGDVCATNEECRINCQCDAAYCDLSCNMCVYMLHVMDTIDANIPNQPCISEYQNCGKKTSSLQ.

The first 20 residues, 1 to 20 (MHNISFKLLLLCDLFLSSSS), serve as a signal peptide directing secretion. 2 cysteine pairs are disulfide-bonded: Cys-31-Cys-48 and Cys-37-Cys-55.

The protein belongs to the DEFL family.

The protein localises to the secreted. In Arabidopsis thaliana (Mouse-ear cress), this protein is Putative defensin-like protein 254.